Consider the following 156-residue polypeptide: Small ribosomal subunit protein uS7cz/uS7cy (156 aa).

This sequence belongs to the universal ribosomal protein uS7 family. Part of the 30S ribosomal subunit.

The protein resides in the plastid. Its subcellular location is the chloroplast. In terms of biological role, one of the primary rRNA binding proteins, it binds directly to 16S rRNA where it nucleates assembly of the head domain of the 30S subunit. This Triticum aestivum (Wheat) protein is Small ribosomal subunit protein uS7cz/uS7cy (rps7-A).